The chain runs to 173 residues: Photosystem I assembly protein Ycf3 (173 aa).

TPR repeat units follow at residues 35-68 (AFYY…EKDP), 72-105 (SFIL…NPNL), and 120-153 (GNKL…APYN).

Belongs to the Ycf3 family.

The protein localises to the plastid. It is found in the chloroplast thylakoid membrane. Essential for the assembly of the photosystem I (PSI) complex. May act as a chaperone-like factor to guide the assembly of the PSI subunits. In Cyanidium caldarium (Red alga), this protein is Photosystem I assembly protein Ycf3.